The following is a 168-amino-acid chain: Alkyl hydroperoxide reductase C (168 aa).

The Thioredoxin domain occupies 1–138; the sequence is EFIEVSEESF…LVNKIKAAQY (138 aa). Residue cysteine 28 is the Cysteine sulfenic acid (-SOH) intermediate of the active site.

This sequence belongs to the peroxiredoxin family. AhpC/Prx1 subfamily. Homodimer; disulfide-linked, upon oxidation. 5 homodimers assemble to form a ring-like decamer.

The protein resides in the cytoplasm. It catalyses the reaction a hydroperoxide + NADH + H(+) = an alcohol + NAD(+) + H2O. Thiol-specific peroxidase that catalyzes the reduction of hydrogen peroxide and organic hydroperoxides to water and alcohols, respectively. Plays a role in cell protection against oxidative stress by detoxifying peroxides. The polypeptide is Alkyl hydroperoxide reductase C (Ferdinandcohnia aciditolerans (strain JCM 32973 / CCTCC AB 2017280 / YN-1) (Bacillus aciditolerans)).